The sequence spans 100 residues: Guanine nucleotide exchange factor MSS4 homolog (100 aa).

Positions 1–100 (MSNLRIVCQH…YLLLCSLEKN (100 aa)) constitute an MSS4 domain. 4 residues coordinate Zn(2+): Cys-8, Cys-11, Cys-73, and Cys-76.

It belongs to the DSS4/MSS4 family.

Functionally, guanine-nucleotide-releasing protein that acts on members of the sec4/ypt1/rab subfamily. In Schizosaccharomyces pombe (strain 972 / ATCC 24843) (Fission yeast), this protein is Guanine nucleotide exchange factor MSS4 homolog.